The chain runs to 564 residues: Probable pectinesterase/pectinesterase inhibitor 46 (564 aa).

The helical transmembrane segment at 25 to 45 threads the bilayer; that stretch reads IAIIAISSIVLVCIVVGAVVG. The interval 62 to 207 is pectinesterase inhibitor 46; sequence EPISVSVKAL…TEMTSNALAI (146 aa). N90, N126, N147, and N196 each carry an N-linked (GlcNAc...) asparagine glycan. A pectinesterase 46 region spans residues 257 to 550; it reads TIVVAKDGSG…FTVKPFIDGN (294 aa). Substrate is bound by residues T332 and Q362. D385 acts as the Proton donor; for pectinesterase activity in catalysis. Cysteines 399 and 419 form a disulfide. The Nucleophile; for pectinesterase activity role is filled by D406. N-linked (GlcNAc...) asparagine glycosylation is found at N452 and N460. Residues R470 and W472 each contribute to the substrate site.

In the N-terminal section; belongs to the PMEI family. It in the C-terminal section; belongs to the pectinesterase family.

The protein localises to the membrane. The catalysed reaction is [(1-&gt;4)-alpha-D-galacturonosyl methyl ester](n) + n H2O = [(1-&gt;4)-alpha-D-galacturonosyl](n) + n methanol + n H(+). It participates in glycan metabolism; pectin degradation; 2-dehydro-3-deoxy-D-gluconate from pectin: step 1/5. Functionally, acts in the modification of cell walls via demethylesterification of cell wall pectin. The chain is Probable pectinesterase/pectinesterase inhibitor 46 (PME46) from Arabidopsis thaliana (Mouse-ear cress).